A 172-amino-acid chain; its full sequence is uncharacterized protein (172 aa).

The signal sequence occupies residues 1-21 (MMKFKKCLLPVAMLASFTLAG). C22 carries the N-palmitoyl cysteine lipid modification. A lipid anchor (S-diacylglycerol cysteine) is attached at C22.

It localises to the cell membrane. This is an uncharacterized protein from Escherichia coli O157:H7.